A 240-amino-acid chain; its full sequence is 4-hydroxy-tetrahydrodipicolinate reductase (240 aa).

NAD(+) is bound by residues 79 to 81 and 103 to 106; these read ATT and SANM. The Proton donor/acceptor role is filled by H135. H136 contributes to the (S)-2,3,4,5-tetrahydrodipicolinate binding site. K139 functions as the Proton donor in the catalytic mechanism. 145 to 146 contacts (S)-2,3,4,5-tetrahydrodipicolinate; the sequence is GT.

The protein belongs to the DapB family.

Its subcellular location is the cytoplasm. The catalysed reaction is (S)-2,3,4,5-tetrahydrodipicolinate + NAD(+) + H2O = (2S,4S)-4-hydroxy-2,3,4,5-tetrahydrodipicolinate + NADH + H(+). It carries out the reaction (S)-2,3,4,5-tetrahydrodipicolinate + NADP(+) + H2O = (2S,4S)-4-hydroxy-2,3,4,5-tetrahydrodipicolinate + NADPH + H(+). The protein operates within amino-acid biosynthesis; L-lysine biosynthesis via DAP pathway; (S)-tetrahydrodipicolinate from L-aspartate: step 4/4. In terms of biological role, catalyzes the conversion of 4-hydroxy-tetrahydrodipicolinate (HTPA) to tetrahydrodipicolinate. The sequence is that of 4-hydroxy-tetrahydrodipicolinate reductase from Staphylococcus aureus (strain MRSA252).